Here is a 427-residue protein sequence, read N- to C-terminus: Gamma-glutamyl phosphate reductase (427 aa).

This sequence belongs to the gamma-glutamyl phosphate reductase family.

The protein localises to the cytoplasm. It catalyses the reaction L-glutamate 5-semialdehyde + phosphate + NADP(+) = L-glutamyl 5-phosphate + NADPH + H(+). Its pathway is amino-acid biosynthesis; L-proline biosynthesis; L-glutamate 5-semialdehyde from L-glutamate: step 2/2. Its function is as follows. Catalyzes the NADPH-dependent reduction of L-glutamate 5-phosphate into L-glutamate 5-semialdehyde and phosphate. The product spontaneously undergoes cyclization to form 1-pyrroline-5-carboxylate. This is Gamma-glutamyl phosphate reductase from Rhizobium meliloti (strain 1021) (Ensifer meliloti).